A 218-amino-acid chain; its full sequence is Recombination protein RecR (218 aa).

Residues 56-71 (CRICCNISRDEVCRIC) form a C4-type zinc finger. One can recognise a Toprim domain in the interval 79–195 (GLICVVEEPK…VVSRLASGMP (117 aa)).

This sequence belongs to the RecR family.

In terms of biological role, may play a role in DNA repair. It seems to be involved in an RecBC-independent recombinational process of DNA repair. It may act with RecF and RecO. This is Recombination protein RecR from Corynebacterium efficiens (strain DSM 44549 / YS-314 / AJ 12310 / JCM 11189 / NBRC 100395).